A 163-amino-acid polypeptide reads, in one-letter code: 3-isopropylmalate dehydratase small subunit (163 aa).

This sequence belongs to the LeuD family. LeuD type 2 subfamily. As to quaternary structure, heterodimer of LeuC and LeuD.

It catalyses the reaction (2R,3S)-3-isopropylmalate = (2S)-2-isopropylmalate. Its pathway is amino-acid biosynthesis; L-leucine biosynthesis; L-leucine from 3-methyl-2-oxobutanoate: step 2/4. Its function is as follows. Catalyzes the isomerization between 2-isopropylmalate and 3-isopropylmalate, via the formation of 2-isopropylmaleate. In Clostridioides difficile (strain 630) (Peptoclostridium difficile), this protein is 3-isopropylmalate dehydratase small subunit.